Reading from the N-terminus, the 369-residue chain is 3-dehydroquinate synthase (369 aa).

NAD(+) is bound by residues 110 to 114 (GVIGD), 134 to 135 (TT), Lys147, Lys156, and 174 to 177 (TLKT). Glu189, His254, and His271 together coordinate Zn(2+).

The protein belongs to the sugar phosphate cyclases superfamily. Dehydroquinate synthase family. The cofactor is Co(2+). Zn(2+) is required as a cofactor. Requires NAD(+) as cofactor.

It localises to the cytoplasm. It catalyses the reaction 7-phospho-2-dehydro-3-deoxy-D-arabino-heptonate = 3-dehydroquinate + phosphate. The protein operates within metabolic intermediate biosynthesis; chorismate biosynthesis; chorismate from D-erythrose 4-phosphate and phosphoenolpyruvate: step 2/7. In terms of biological role, catalyzes the conversion of 3-deoxy-D-arabino-heptulosonate 7-phosphate (DAHP) to dehydroquinate (DHQ). The protein is 3-dehydroquinate synthase of Cyanothece sp. (strain PCC 7425 / ATCC 29141).